The following is a 226-amino-acid chain: Ribonuclease 3 (226 aa).

Residues 6–128 enclose the RNase III domain; sequence INRLQRKLGY…LIGGVFLDSN (123 aa). Glu-41 lines the Mg(2+) pocket. Asp-45 is a catalytic residue. The Mg(2+) site is built by Asp-114 and Glu-117. Glu-117 is an active-site residue. Residues 155–225 enclose the DRBM domain; the sequence is DPKTRLQEYL…AEQVLKKLEL (71 aa).

This sequence belongs to the ribonuclease III family. In terms of assembly, homodimer. Mg(2+) serves as cofactor.

It is found in the cytoplasm. The catalysed reaction is Endonucleolytic cleavage to 5'-phosphomonoester.. Its function is as follows. Digests double-stranded RNA. Involved in the processing of primary rRNA transcript to yield the immediate precursors to the large and small rRNAs (23S and 16S). Processes some mRNAs, and tRNAs when they are encoded in the rRNA operon. Processes pre-crRNA and tracrRNA of type II CRISPR loci if present in the organism. The sequence is that of Ribonuclease 3 from Salmonella choleraesuis (strain SC-B67).